Consider the following 250-residue polypeptide: Acidic endochitinase (250 aa).

Glutamine 1 bears the Pyrrolidone carboxylic acid mark. The Chitin-binding type-1 domain occupies 1–36 (QNCQCDTTIYCCSQHGYCGNSYDYCGPGCQAGPCWD). Cystine bridges form between cysteine 3–cysteine 12, cysteine 5–cysteine 18, cysteine 11–cysteine 25, cysteine 29–cysteine 34, cysteine 66–cysteine 115, cysteine 128–cysteine 136, and cysteine 218–cysteine 250. Catalysis depends on glutamate 110, which acts as the Proton donor.

The protein belongs to the glycosyl hydrolase 19 family. Chitinase class I subfamily.

The enzyme catalyses Random endo-hydrolysis of N-acetyl-beta-D-glucosaminide (1-&gt;4)-beta-linkages in chitin and chitodextrins.. Defense against chitin-containing fungal pathogens. In Dioscorea japonica (Japanese yam), this protein is Acidic endochitinase.